The primary structure comprises 133 residues: Small ribosomal subunit protein uS8 (133 aa).

This sequence belongs to the universal ribosomal protein uS8 family. In terms of assembly, part of the 30S ribosomal subunit. Contacts proteins S5 and S12.

Functionally, one of the primary rRNA binding proteins, it binds directly to 16S rRNA central domain where it helps coordinate assembly of the platform of the 30S subunit. In Synechococcus sp. (strain WH7803), this protein is Small ribosomal subunit protein uS8.